The primary structure comprises 609 residues: Sodium- and chloride-dependent GABA transporter 2 (609 aa).

Positions Met1–Glu13 are enriched in polar residues. Residues Met1 to Lys23 form a disordered region. Residues Met1 to Glu40 lie on the Cytoplasmic side of the membrane. A run of 3 helical transmembrane segments spans residues Phe41–Leu61, Gly68–Leu88, and Ile121–Phe141. At Ser142–Trp206 the chain is on the extracellular side. Cys153 and Cys162 are disulfide-bonded. N-linked (GlcNAc...) asparagine glycans are attached at residues Asn169 and Asn173. Helical transmembrane passes span Glu207 to Val227 and Val233 to Val253. An N-linked (GlcNAc...) asparagine glycan is attached at Asn269. A run of 7 helical transmembrane segments spans residues Ala282–Ser302, Phe319–Met339, Val366–Leu386, Val418–Gly438, Gly453–Ala473, Pro490–Phe510, and Trp528–Trp548. At Ser549–Cys609 the chain is on the cytoplasmic side. Thr594 bears the Phosphothreonine mark. Ser598 bears the Phosphoserine mark.

Belongs to the sodium:neurotransmitter symporter (SNF) (TC 2.A.22) family. SLC6A13 subfamily.

Its subcellular location is the cell membrane. The protein localises to the basolateral cell membrane. The catalysed reaction is 4-aminobutanoate(out) + chloride(out) + 2 Na(+)(out) = 4-aminobutanoate(in) + chloride(in) + 2 Na(+)(in). The enzyme catalyses taurine(out) + chloride(out) + 2 Na(+)(out) = taurine(in) + chloride(in) + 2 Na(+)(in). It carries out the reaction beta-alanine(out) + chloride(out) + 2 Na(+)(out) = beta-alanine(in) + chloride(in) + 2 Na(+)(in). It catalyses the reaction hypotaurine(out) + chloride(out) + 2 Na(+)(out) = hypotaurine(in) + chloride(in) + 2 Na(+)(in). Mediates sodium- and chloride-dependent transport of gamma-aminobutyric acid (GABA). Can also mediate transport of beta-alanine, taurine and hypotaurine. This is Sodium- and chloride-dependent GABA transporter 2 (SLC6A13) from Macaca fascicularis (Crab-eating macaque).